A 142-amino-acid polypeptide reads, in one-letter code: MTHATPQELQAETREIIENLLNDGSDPNALYIIEHHIAHYDFDKLEKIAVDAFKAGYEVSDAEELEDDNGKPLYCFDIVAEVELKAEIIDAQQQQLVPLVAKHGGIYDGWGTYFEDPNADEDEYGEDGEFFDDEFADDDEKR.

The disordered stretch occupies residues 117-142 (PNADEDEYGEDGEFFDDEFADDDEKR).

The protein belongs to the RraB family. As to quaternary structure, interacts with the C-terminal region of Rne.

It localises to the cytoplasm. Globally modulates RNA abundance by binding to RNase E (Rne) and regulating its endonucleolytic activity. Can modulate Rne action in a substrate-dependent manner by altering the composition of the degradosome. The protein is Regulator of ribonuclease activity B of Actinobacillus succinogenes (strain ATCC 55618 / DSM 22257 / CCUG 43843 / 130Z).